The following is a 476-amino-acid chain: Adenosylhomocysteinase (476 aa).

The substrate site is built by Thr-67, Asp-142, and Glu-202. 203–205 is a binding site for NAD(+); that stretch reads TTT. Positions 232 and 236 each coordinate substrate. NAD(+) is bound by residues Asn-237, 266–271, Glu-289, Asn-324, 345–347, and Asn-390; these read GYGDVG and IGH.

This sequence belongs to the adenosylhomocysteinase family. It depends on NAD(+) as a cofactor.

Its subcellular location is the cytoplasm. It catalyses the reaction S-adenosyl-L-homocysteine + H2O = L-homocysteine + adenosine. It functions in the pathway amino-acid biosynthesis; L-homocysteine biosynthesis; L-homocysteine from S-adenosyl-L-homocysteine: step 1/1. May play a key role in the regulation of the intracellular concentration of adenosylhomocysteine. The polypeptide is Adenosylhomocysteinase (Prochlorococcus marinus (strain MIT 9211)).